The chain runs to 124 residues: Glycine cleavage system H protein (124 aa).

Residues 22–104 enclose the Lipoyl-binding domain; it reads LVITGITDHA…YGKGWIYKIK (83 aa). The residue at position 63 (Lys63) is an N6-lipoyllysine.

This sequence belongs to the GcvH family. In terms of assembly, the glycine cleavage system is composed of four proteins: P, T, L and H. It depends on (R)-lipoate as a cofactor.

In terms of biological role, the glycine cleavage system catalyzes the degradation of glycine. The H protein shuttles the methylamine group of glycine from the P protein to the T protein. The polypeptide is Glycine cleavage system H protein (Acinetobacter baumannii (strain ACICU)).